The primary structure comprises 195 residues: Probable molybdenum cofactor guanylyltransferase (195 aa).

GTP contacts are provided by residues 8–10, K20, D65, and D96; that span reads LSG. D96 is a Mg(2+) binding site.

This sequence belongs to the MobA family. Mg(2+) is required as a cofactor.

It localises to the cytoplasm. The catalysed reaction is Mo-molybdopterin + GTP + H(+) = Mo-molybdopterin guanine dinucleotide + diphosphate. Transfers a GMP moiety from GTP to Mo-molybdopterin (Mo-MPT) cofactor (Moco or molybdenum cofactor) to form Mo-molybdopterin guanine dinucleotide (Mo-MGD) cofactor. This is Probable molybdenum cofactor guanylyltransferase from Bacillus licheniformis (strain ATCC 14580 / DSM 13 / JCM 2505 / CCUG 7422 / NBRC 12200 / NCIMB 9375 / NCTC 10341 / NRRL NRS-1264 / Gibson 46).